We begin with the raw amino-acid sequence, 142 residues long: Hemoglobin subunit alpha-1 (142 aa).

S1 carries the post-translational modification N-acetylserine. The Globin domain maps to 1-142 (SLSDKDKAAV…VALALAERYR (142 aa)). H59 is a binding site for O2. H88 contributes to the heme b binding site.

It belongs to the globin family. As to quaternary structure, hb1 is a heterotetramer of two alpha-1 chains and two beta chains. HbC is a heterotetramer of two alpha-1 chains and two beta-C chains. In terms of tissue distribution, red blood cells.

Involved in oxygen transport from gills to the various peripheral tissues. The sequence is that of Hemoglobin subunit alpha-1 (hba1) from Trematomus newnesi (Dusky notothen).